We begin with the raw amino-acid sequence, 517 residues long: Sphingolipid C9-methyltransferase A (517 aa).

The next 2 helical transmembrane spans lie at 58-78 and 80-100; these read LLILLLVVIPWYTARQIGGGL and TTIFFAIFTTIPILMAFWSIA. Residues 223-224, 286-291, and 316-317 contribute to the S-adenosyl-L-methionine site; these read YT, TLGRNQ, and YR. The N-linked (GlcNAc...) asparagine glycan is linked to N290. The N-linked (GlcNAc...) asparagine glycan is linked to N478.

The protein belongs to the CFA/CMAS family.

It is found in the membrane. It catalyses the reaction a (4E,8E)-4-sphinga-4,8-dienine ceramide + S-adenosyl-L-methionine = a 9-methyl-(4E,8E)-sphinga-4,8-dienine ceramide + S-adenosyl-L-homocysteine + H(+). The protein operates within lipid metabolism; sphingolipid metabolism. In terms of biological role, catalyzes methylation of the sphingoid base component of glucosylceramides (GluCers) at the C9-position. Sphingolipid C9-methylation requires 4,8-desaturated ceramides as substrates. Glucosylceramides play important roles in growth, differentiation and pathogenicity. The methyl group at the C9-position distinguishes fungal glucosylceramides from those of plants and animals and may thus play a role in host-pathogen interactions enabling the host to recognize the fungal attack and initiate specific defense responses. In Emericella nidulans (strain FGSC A4 / ATCC 38163 / CBS 112.46 / NRRL 194 / M139) (Aspergillus nidulans), this protein is Sphingolipid C9-methyltransferase A.